The following is a 214-amino-acid chain: Adenylate kinase (214 aa).

Position 10–15 (10–15) interacts with ATP; the sequence is GAGKGT. Residues 30–59 are NMP; that stretch reads STGDMLRAAVKSGSELGKQAKDIMDAGKLV. AMP is bound by residues Thr-31, Arg-36, 57 to 59, 85 to 88, and Gln-92; these read KLV and GFPR. Residues 122-159 form an LID region; the sequence is GRRVHAPSGRVYHVKFNPPKVEGKDDVTGEELTTRKDD. ATP-binding positions include Arg-123 and 132–133; that span reads VY. Residues Arg-156 and Arg-167 each contribute to the AMP site. Lys-192 carries the N6-acetyllysine modification. An ATP-binding site is contributed by Lys-200.

The protein belongs to the adenylate kinase family. Monomer.

The protein localises to the cytoplasm. The enzyme catalyses AMP + ATP = 2 ADP. The protein operates within purine metabolism; AMP biosynthesis via salvage pathway; AMP from ADP: step 1/1. In terms of biological role, catalyzes the reversible transfer of the terminal phosphate group between ATP and AMP. Plays an important role in cellular energy homeostasis and in adenine nucleotide metabolism. This chain is Adenylate kinase, found in Escherichia coli O8 (strain IAI1).